A 260-amino-acid polypeptide reads, in one-letter code: Hydroxyethylthiazole kinase (260 aa).

ATP contacts are provided by Arg126 and Ser172. Residue Gly199 participates in substrate binding.

The protein belongs to the Thz kinase family. Requires Mg(2+) as cofactor.

The enzyme catalyses 5-(2-hydroxyethyl)-4-methylthiazole + ATP = 4-methyl-5-(2-phosphooxyethyl)-thiazole + ADP + H(+). It functions in the pathway cofactor biosynthesis; thiamine diphosphate biosynthesis; 4-methyl-5-(2-phosphoethyl)-thiazole from 5-(2-hydroxyethyl)-4-methylthiazole: step 1/1. Its function is as follows. Catalyzes the phosphorylation of the hydroxyl group of 4-methyl-5-beta-hydroxyethylthiazole (THZ). In Burkholderia thailandensis (strain ATCC 700388 / DSM 13276 / CCUG 48851 / CIP 106301 / E264), this protein is Hydroxyethylthiazole kinase.